A 284-amino-acid chain; its full sequence is Trimeric intracellular cation channel type B-A (284 aa).

Residues 1–15 (MESLSELSVQFSQLS) lie on the Lumenal side of the membrane. Residues 16–33 (MFPFFDMAHYVVSVMSAR) traverse the membrane as a helical segment. The Cytoplasmic segment spans residues 34–46 (EQAGALDIAARSP). A helical transmembrane segment spans residues 47-68 (MASWFSAMLYCFGGGILSSILL). Residues 69–79 (AEPPIAVLSNT) lie on the Lumenal side of the membrane. A helical transmembrane segment spans residues 80-99 (TNIMLASTIWYMVYYFPYDL). The Cytoplasmic portion of the chain corresponds to 100-102 (FYN). The helical transmembrane segment at 103–121 (CFFFLPIRLIIAGMKEVTR) threads the bilayer. A 1,2-diacyl-sn-glycero-3-phospho-(1D-myo-inositol-4,5-bisphosphate) contacts are provided by lysine 117 and arginine 121. Over 122–137 (TWKILSGVTHAHSHYK) the chain is Lumenal. The chain crosses the membrane as a helical span at residues 138–155 (DALLVMITIGWARGAGGG). The Cytoplasmic segment spans residues 156-177 (LISNFEQLVRGVWKPESNEFLK). The chain crosses the membrane as a helical span at residues 178–195 (MSYPVKVTLIGAVLFTLQ). At 196–206 (HGHYLPISRHN) the chain is on the lumenal side. Residues 207-224 (LMLIYTMFLVLIKVTMML) form a helical membrane-spanning segment. Residues 225 to 284 (THSTASPFLPLETPLQRILFGQRQKPSEVRQSASSSGAKGKPSKKTLDKDSGEQSKKKDS) lie on the Cytoplasmic side of the membrane. A disordered region spans residues 246 to 284 (QRQKPSEVRQSASSSGAKGKPSKKTLDKDSGEQSKKKDS). The span at 269–284 (KTLDKDSGEQSKKKDS) shows a compositional bias: basic and acidic residues.

It belongs to the TMEM38 family. As to quaternary structure, homotrimer; conformation seems to be controled by binding to diacylglycerol (DAG).

It localises to the endoplasmic reticulum membrane. It carries out the reaction K(+)(in) = K(+)(out). Channel activity is activated by increased cytosolic Ca(2+) levels and blocked by luminal high Ca(2+) levels. Its function is as follows. Intracellular monovalent cation channel required for maintenance of rapid intracellular calcium release. Acts as a potassium counter-ion channel that functions in synchronization with calcium release from intracellular stores. Activated by increased cytosolic Ca(2+) levels. The polypeptide is Trimeric intracellular cation channel type B-A (tmem38b-a) (Xenopus laevis (African clawed frog)).